We begin with the raw amino-acid sequence, 305 residues long: Aspartate carbamoyltransferase catalytic subunit (305 aa).

Residues Arg51 and Thr52 each coordinate carbamoyl phosphate. Lys79 provides a ligand contact to L-aspartate. Carbamoyl phosphate is bound by residues Arg101, His130, and Gln133. Residues Arg163 and Arg215 each contribute to the L-aspartate site. Carbamoyl phosphate is bound by residues Gly256 and Pro257.

It belongs to the aspartate/ornithine carbamoyltransferase superfamily. ATCase family. In terms of assembly, heterododecamer (2C3:3R2) of six catalytic PyrB chains organized as two trimers (C3), and six regulatory PyrI chains organized as three dimers (R2).

The enzyme catalyses carbamoyl phosphate + L-aspartate = N-carbamoyl-L-aspartate + phosphate + H(+). Its pathway is pyrimidine metabolism; UMP biosynthesis via de novo pathway; (S)-dihydroorotate from bicarbonate: step 2/3. Catalyzes the condensation of carbamoyl phosphate and aspartate to form carbamoyl aspartate and inorganic phosphate, the committed step in the de novo pyrimidine nucleotide biosynthesis pathway. The sequence is that of Aspartate carbamoyltransferase catalytic subunit from Ehrlichia canis (strain Jake).